The primary structure comprises 147 residues: UPF0306 protein YhbP (147 aa).

Belongs to the UPF0306 family.

The sequence is that of UPF0306 protein YhbP from Shigella boydii serotype 4 (strain Sb227).